Here is a 267-residue protein sequence, read N- to C-terminus: Trehalose 2-sulfotransferase (267 aa).

Alpha,alpha-trehalose-binding positions include glutamine 14, 33 to 39, proline 48, and tryptophan 53; that span reads EPQEFFQ. Glutamate 36 acts as the Proton acceptor in catalysis.

It belongs to the Stf0 sulfotransferase family. Homodimer.

The enzyme catalyses alpha,alpha-trehalose + 3'-phosphoadenylyl sulfate = 2-O-sulfo-alpha,alpha-trehalose + adenosine 3',5'-bisphosphate + H(+). It functions in the pathway glycolipid metabolism. In terms of biological role, catalyzes the sulfuryl group transfer from 3'-phosphoadenosine-5'-phosphosulfate (PAPS) to trehalose, leading to trehalose-2-sulfate (T2S). The sulfation of trehalose is the first step in the biosynthesis of sulfolipid-1 (SL-1), a major cell wall glycolipid in pathogenic mycobacteria. Cannot use free glucose and unnatural stereoisomers of trehalose (alpha,beta (neo-trehalose) and beta,beta (iso-trehalose)) as substrates. The sequence is that of Trehalose 2-sulfotransferase from Mycolicibacterium smegmatis (strain ATCC 700084 / mc(2)155) (Mycobacterium smegmatis).